A 191-amino-acid polypeptide reads, in one-letter code: Cell number regulator 1 (191 aa).

Residues 13–44 (FSAGAPPTAPPPPAAYHQQQQQHGANMDTSRP) form a disordered region. A compositionally biased stretch (low complexity) spans 27-37 (AYHQQQQQHGA). The helical transmembrane segment at 91–113 (IASGLVYGLICASTGMGCLYSCL) threads the bilayer.

It belongs to the cornifelin family. As to expression, expressed in roots, coleoptiles, stalks and silks. Detected in leaves, apical meristems, immature ears and pericarps. Highest expression in coleoptiles and silks.

It is found in the membrane. In terms of biological role, acts as a negative regulator of cell number. The chain is Cell number regulator 1 (CNR1) from Zea mays (Maize).